The primary structure comprises 20 residues: Pommaclein (20 aa).

This sequence belongs to the GASA family. In terms of tissue distribution, expressed in pulp (aril) of fruits (at protein level).

The chain is Pommaclein from Punica granatum (Pomegranate).